Consider the following 277-residue polypeptide: Carbonyl reductase [NADPH] 1 (277 aa).

At S2 the chain carries N-acetylserine. Phosphoserine occurs at positions 2 and 30. NADP(+) contacts are provided by residues V10 to V34, D63 to I64, and N90. Glutathione is bound by residues F95 to V97 and Q106. S140 contacts substrate. A193–Y194 is a glutathione binding site. Residue Y194 is the Proton acceptor of the active site. NADP(+)-binding positions include Y194 to K198 and V231 to T233. K239 bears the N6-1-carboxyethyl lysine mark. Residues P258–W277 are disordered.

This sequence belongs to the short-chain dehydrogenases/reductases (SDR) family. In terms of assembly, monomer.

It localises to the cytoplasm. The enzyme catalyses a secondary alcohol + NADP(+) = a ketone + NADPH + H(+). It carries out the reaction prostaglandin F2alpha + NADP(+) = prostaglandin E2 + NADPH + H(+). The catalysed reaction is prostaglandin E1 + NADP(+) = 15-oxoprostaglandin E1 + NADPH + H(+). It catalyses the reaction menadione + NADPH + H(+) = menadiol + NADP(+). The enzyme catalyses prostaglandin D2 + NADP(+) = 15-oxoprostaglandin D2 + NADPH + H(+). It carries out the reaction prostaglandin E2 + NADP(+) = 15-oxoprostaglandin E2 + NADPH + H(+). The catalysed reaction is prostaglandin F2alpha + NADP(+) = 15-oxoprostaglandin F2alpha + NADPH + H(+). It catalyses the reaction daunorubicin + NADPH + H(+) = 13-dihydrodaunorubicin + NADP(+). The enzyme catalyses S-nitrosoglutathione + NADPH + H(+) = S-(hydroxysulfenamide)glutathione + NADP(+). It carries out the reaction corticosterone + NADPH + H(+) = 20beta-dihydrocorticosterone + NADP(+). The catalysed reaction is a primary alcohol + NADP(+) = an aldehyde + NADPH + H(+). It catalyses the reaction cortisol + NADPH + H(+) = 20beta-dihydrocortisol + NADP(+). Functionally, NADPH-dependent reductase with broad substrate specificity. Catalyzes the reduction of a wide variety of carbonyl compounds including quinones, prostaglandins, menadione, plus various xenobiotics. Catalyzes the reduction of the antitumor anthracyclines doxorubicin and daunorubicin to the cardiotoxic compounds doxorubicinol and daunorubicinol. Can convert prostaglandin E to prostaglandin F2-alpha. Can bind glutathione, which explains its higher affinity for glutathione-conjugated substrates. Catalyzes the reduction of S-nitrosoglutathione. In addition, participates in the glucocorticoid metabolism by catalyzing the NADPH-dependent cortisol/corticosterone into 20beta-dihydrocortisol (20b-DHF) or 20beta-corticosterone (20b-DHB), which are weak agonists of NR3C1 and NR3C2 in adipose tissue. The protein is Carbonyl reductase [NADPH] 1 of Mus musculus (Mouse).